The sequence spans 451 residues: Chromosomal replication initiator protein DnaA (451 aa).

The interval 1–72 (MQSIEDIWQE…ANILQEITGR (72 aa)) is domain I, interacts with DnaA modulators. Residues 72–108 (RLFDVRFIDGEQEENFEYTVIKPNPALDEDGIEIGKH) are domain II. The interval 109 to 325 (MLNPRYVFDT…GALIRVVAYS (217 aa)) is domain III, AAA+ region. Residues Gly153, Gly155, Lys156, and Thr157 each contribute to the ATP site. The domain IV, binds dsDNA stretch occupies residues 326 to 451 (SLVNKDITAG…KNLRKSQNMF (126 aa)).

This sequence belongs to the DnaA family. As to quaternary structure, oligomerizes as a right-handed, spiral filament on DNA at oriC.

Its subcellular location is the cytoplasm. In terms of biological role, plays an essential role in the initiation and regulation of chromosomal replication. ATP-DnaA binds to the origin of replication (oriC) to initiate formation of the DNA replication initiation complex once per cell cycle. Binds the DnaA box (a 9 base pair repeat at the origin) and separates the double-stranded (ds)DNA. Forms a right-handed helical filament on oriC DNA; dsDNA binds to the exterior of the filament while single-stranded (ss)DNA is stabiized in the filament's interior. The ATP-DnaA-oriC complex binds and stabilizes one strand of the AT-rich DNA unwinding element (DUE), permitting loading of DNA polymerase. After initiation quickly degrades to an ADP-DnaA complex that is not apt for DNA replication. Binds acidic phospholipids. This is Chromosomal replication initiator protein DnaA from Listeria welshimeri serovar 6b (strain ATCC 35897 / DSM 20650 / CCUG 15529 / CIP 8149 / NCTC 11857 / SLCC 5334 / V8).